Reading from the N-terminus, the 100-residue chain is FGLGGVGGLGVGGLGVGGLGAVPGAVGLGGVSPAAAAKAAKFGAAGLGGVLGAGRPFPIGGGAGGLGVGGKPPKPFGGALGALGFPGGACLGKSCGRKRK.

P72 and P86 each carry 4-hydroxyproline. A disulfide bridge connects residues C90 and C95.

The protein belongs to the elastin family. In terms of assembly, the polymeric elastin chains are cross-linked together into an extensible 3D network. Forms a ternary complex with BGN and MFAP2. Interacts with MFAP2 via divalent cations (calcium &gt; magnesium &gt; manganese) in a dose-dependent and saturating manner. Interacts with FBLN5 and FBN1. Forms a ternary complex with FBN1 and FBLN2 or FBLN5. Interacts with MFAP4 in a Ca (2+)-dependent manner; this interaction promotes ELN self-assembly. Interacts with EFEMP2 with moderate affinity. Post-translationally, elastin is formed through the cross-linking of its soluble precursor tropoelastin. Cross-linking is initiated through the action of lysyl oxidase on exposed lysines to form allysine. Subsequent spontaneous condensation reactions with other allysine or unmodified lysine residues result in various bi-, tri-, and tetrafunctional cross-links. The most abundant cross-links in mature elastin fibers are lysinonorleucine, allysine aldol, desmosine, and isodesmosine. Hydroxylation on proline residues within the sequence motif, GXPG, is most likely to be 4-hydroxy as this fits the requirement for 4-hydroxylation in vertebrates.

The protein resides in the secreted. Its subcellular location is the extracellular space. The protein localises to the extracellular matrix. In terms of biological role, major structural protein of tissues such as aorta and nuchal ligament, which must expand rapidly and recover completely. Molecular determinant of the late arterial morphogenesis, stabilizing arterial structure by regulating proliferation and organization of vascular smooth muscle. The sequence is that of Elastin (ELN) from Ovis aries (Sheep).